A 194-amino-acid chain; its full sequence is MLSSPLRVAVVCVSNINRSMEAHSILRRKGLSVRSFGTESHVRLPGRRPNHPVVYDFATTYKEMYNDLLRKDRECYTHNGILHILGRNERIKPGPERFQECTEFFDVIFTCEERVYDTVVEDLCSREQQTFQPVHVINMDIKDTLEGAILGAFLICEICQCLQQSDDMEDSLEELLLQMEEKAGKSFLHTVCFY.

It belongs to the SSU72 phosphatase family.

It is found in the nucleus. It catalyses the reaction O-phospho-L-seryl-[protein] + H2O = L-seryl-[protein] + phosphate. The enzyme catalyses O-phospho-L-threonyl-[protein] + H2O = L-threonyl-[protein] + phosphate. Its function is as follows. Protein phosphatase that catalyzes the dephosphorylation of the C-terminal domain of RNA polymerase II. Plays a role in RNA processing and termination. The protein is RNA polymerase II subunit A C-terminal domain phosphatase SSU72 like protein 6 of Homo sapiens (Human).